Here is a 295-residue protein sequence, read N- to C-terminus: Nucleotide-binding protein BH3569 (295 aa).

Residue 14-21 (GMSGAGKT) participates in ATP binding. 65-68 (DLRG) contacts GTP.

It belongs to the RapZ-like family.

Displays ATPase and GTPase activities. This Halalkalibacterium halodurans (strain ATCC BAA-125 / DSM 18197 / FERM 7344 / JCM 9153 / C-125) (Bacillus halodurans) protein is Nucleotide-binding protein BH3569.